Here is a 111-residue protein sequence, read N- to C-terminus: Ig kappa chain V-III region PC 2485/PC 4039 (111 aa).

The framework-1 stretch occupies residues 1 to 23; it reads DIVLTQSPASLAVSLGQRATISC. Cysteine 23 and cysteine 92 are oxidised to a cystine. The complementarity-determining-1 stretch occupies residues 24-38; it reads RASKSVSTSGYSYMH. The segment at 39–53 is framework-2; it reads WYQQKPGQPPKLLIY. Residues 54-60 are complementarity-determining-2; the sequence is LASSLES. The framework-3 stretch occupies residues 61 to 92; that stretch reads GVPARFSGSGSGTDFTLNIQPVEEEDAAIYYC. Positions 93–101 are complementarity-determining-3; the sequence is QHSRELPLT. Positions 102–111 are framework-4; sequence FGAGTKLELK.

The polypeptide is Ig kappa chain V-III region PC 2485/PC 4039 (Mus musculus (Mouse)).